The following is a 345-amino-acid chain: S-adenosylmethionine:tRNA ribosyltransferase-isomerase (345 aa).

The protein belongs to the QueA family. Monomer.

The protein localises to the cytoplasm. It carries out the reaction 7-aminomethyl-7-carbaguanosine(34) in tRNA + S-adenosyl-L-methionine = epoxyqueuosine(34) in tRNA + adenine + L-methionine + 2 H(+). The protein operates within tRNA modification; tRNA-queuosine biosynthesis. In terms of biological role, transfers and isomerizes the ribose moiety from AdoMet to the 7-aminomethyl group of 7-deazaguanine (preQ1-tRNA) to give epoxyqueuosine (oQ-tRNA). The chain is S-adenosylmethionine:tRNA ribosyltransferase-isomerase from Azoarcus sp. (strain BH72).